Reading from the N-terminus, the 329-residue chain is 4-hydroxy-3-methylbut-2-enyl diphosphate reductase 1 (329 aa).

Cys-29 contacts [4Fe-4S] cluster. Positions 58 and 95 each coordinate (2E)-4-hydroxy-3-methylbut-2-enyl diphosphate. Dimethylallyl diphosphate contacts are provided by His-58 and His-95. The isopentenyl diphosphate site is built by His-58 and His-95. A [4Fe-4S] cluster-binding site is contributed by Cys-117. His-145 contacts (2E)-4-hydroxy-3-methylbut-2-enyl diphosphate. His-145 is a dimethylallyl diphosphate binding site. His-145 serves as a coordination point for isopentenyl diphosphate. The Proton donor role is filled by Glu-147. Position 185 (Thr-185) interacts with (2E)-4-hydroxy-3-methylbut-2-enyl diphosphate. Cys-215 contributes to the [4Fe-4S] cluster binding site. (2E)-4-hydroxy-3-methylbut-2-enyl diphosphate-binding residues include Ser-243, Ser-244, Asn-245, and Ser-287. Residues Ser-243, Ser-244, Asn-245, and Ser-287 each contribute to the dimethylallyl diphosphate site. Residues Ser-243, Ser-244, Asn-245, and Ser-287 each contribute to the isopentenyl diphosphate site.

This sequence belongs to the IspH family. [4Fe-4S] cluster is required as a cofactor.

The enzyme catalyses isopentenyl diphosphate + 2 oxidized [2Fe-2S]-[ferredoxin] + H2O = (2E)-4-hydroxy-3-methylbut-2-enyl diphosphate + 2 reduced [2Fe-2S]-[ferredoxin] + 2 H(+). It carries out the reaction dimethylallyl diphosphate + 2 oxidized [2Fe-2S]-[ferredoxin] + H2O = (2E)-4-hydroxy-3-methylbut-2-enyl diphosphate + 2 reduced [2Fe-2S]-[ferredoxin] + 2 H(+). It participates in isoprenoid biosynthesis; dimethylallyl diphosphate biosynthesis; dimethylallyl diphosphate from (2E)-4-hydroxy-3-methylbutenyl diphosphate: step 1/1. Its pathway is isoprenoid biosynthesis; isopentenyl diphosphate biosynthesis via DXP pathway; isopentenyl diphosphate from 1-deoxy-D-xylulose 5-phosphate: step 6/6. Its function is as follows. Catalyzes the conversion of 1-hydroxy-2-methyl-2-(E)-butenyl 4-diphosphate (HMBPP) into a mixture of isopentenyl diphosphate (IPP) and dimethylallyl diphosphate (DMAPP). Acts in the terminal step of the DOXP/MEP pathway for isoprenoid precursor biosynthesis. This chain is 4-hydroxy-3-methylbut-2-enyl diphosphate reductase 1, found in Mycobacterium tuberculosis (strain CDC 1551 / Oshkosh).